The following is a 519-amino-acid chain: Probable DNA ligase (519 aa).

Glutamate 211 lines the ATP pocket. Lysine 213 acts as the N6-AMP-lysine intermediate in catalysis. 6 residues coordinate ATP: arginine 218, arginine 233, glutamate 262, phenylalanine 302, arginine 374, and lysine 380.

Belongs to the ATP-dependent DNA ligase family. The cofactor is Mg(2+).

The enzyme catalyses ATP + (deoxyribonucleotide)n-3'-hydroxyl + 5'-phospho-(deoxyribonucleotide)m = (deoxyribonucleotide)n+m + AMP + diphosphate.. DNA ligase that seals nicks in double-stranded DNA during DNA replication, DNA recombination and DNA repair. The sequence is that of Probable DNA ligase from Anaeromyxobacter sp. (strain Fw109-5).